The following is a 245-amino-acid chain: Carboxymethylenebutenolidase homolog (245 aa).

Ala-2 is subject to N-acetylalanine. Lys-36 carries the post-translational modification N6-acetyllysine. Residues Cys-132, Asp-179, and His-212 contribute to the active site. Position 223 is a phosphoserine (Ser-223).

The protein belongs to the dienelactone hydrolase family. As to expression, widely expressed, with highest levels in liver, followed by kidney, small intestine and colon. Present in liver and intestine (at protein level).

The protein resides in the cytoplasm. Its subcellular location is the cytosol. Its activity is regulated as follows. Strongly inhibited by p-chloromercuribenzoate (PCMB). Partially inhibited by bis-p-nitrophenylphosphate (BNPP). Not inhibited by DFP, PMSF, eserine or EDTA. Cysteine hydrolase. Can convert the prodrug olmesartan medoxomil into its pharmacologically active metabolite olmerstatan, an angiotensin receptor blocker, in liver and intestine. May also activate beta-lactam antibiotics faropenem medoxomil and lenampicillin. The sequence is that of Carboxymethylenebutenolidase homolog (CMBL) from Homo sapiens (Human).